The primary structure comprises 827 residues: Protein SEY1 (827 aa).

The tract at residues methionine 1–proline 26 is disordered. Over methionine 1–glutamine 719 the chain is Cytoplasmic. The GB1/RHD3-type G domain maps to glycine 63–tyrosine 291. Glycine 73 to serine 80 serves as a coordination point for GTP. 2 coiled-coil regions span residues lysine 389–glutamate 409 and valine 472–lysine 492. Residues isoleucine 720–valine 740 traverse the membrane as a helical segment. At arginine 741–proline 743 the chain is on the lumenal side. The chain crosses the membrane as a helical span at residues leucine 744–leucine 764. At leucine 765–leucine 827 the chain is on the cytoplasmic side. The stretch at glutamine 803–glutamate 823 forms a coiled coil.

It belongs to the TRAFAC class dynamin-like GTPase superfamily. GB1/RHD3 GTPase family. RHD3 subfamily.

The protein resides in the endoplasmic reticulum membrane. Cooperates with the reticulon proteins and tubule-shaping DP1 family proteins to generate and maintain the structure of the tubular endoplasmic reticulum network. Has GTPase activity, which is required for its function in ER organization. The polypeptide is Protein SEY1 (Scheffersomyces stipitis (strain ATCC 58785 / CBS 6054 / NBRC 10063 / NRRL Y-11545) (Yeast)).